The primary structure comprises 226 residues: ATP-dependent dethiobiotin synthetase BioD (226 aa).

14 to 19 contacts ATP; the sequence is GIGKTF. Position 18 (T18) interacts with Mg(2+). The active site involves K39. Position 43 (S43) interacts with substrate. Residues D56, 117-120, 177-178, 206-208, and N213 contribute to the ATP site; these read EGVG, NT, and PHI. Positions 56 and 117 each coordinate Mg(2+).

It belongs to the dethiobiotin synthetase family. In terms of assembly, homodimer. It depends on Mg(2+) as a cofactor.

The protein resides in the cytoplasm. The enzyme catalyses (7R,8S)-7,8-diammoniononanoate + CO2 + ATP = (4R,5S)-dethiobiotin + ADP + phosphate + 3 H(+). The protein operates within cofactor biosynthesis; biotin biosynthesis; biotin from 7,8-diaminononanoate: step 1/2. Functionally, catalyzes a mechanistically unusual reaction, the ATP-dependent insertion of CO2 between the N7 and N8 nitrogen atoms of 7,8-diaminopelargonic acid (DAPA, also called 7,8-diammoniononanoate) to form a ureido ring. The polypeptide is ATP-dependent dethiobiotin synthetase BioD (Xylella fastidiosa (strain M12)).